Consider the following 301-residue polypeptide: Homoserine O-acetyltransferase (301 aa).

Cys142 (acyl-thioester intermediate) is an active-site residue. Substrate is bound by residues Lys163 and Ser192. His235 serves as the catalytic Proton acceptor. Glu237 is a catalytic residue. Position 249 (Arg249) interacts with substrate.

The protein belongs to the MetA family.

The protein localises to the cytoplasm. It catalyses the reaction L-homoserine + acetyl-CoA = O-acetyl-L-homoserine + CoA. It functions in the pathway amino-acid biosynthesis; L-methionine biosynthesis via de novo pathway; O-acetyl-L-homoserine from L-homoserine: step 1/1. In terms of biological role, transfers an acetyl group from acetyl-CoA to L-homoserine, forming acetyl-L-homoserine. This Lachnoclostridium phytofermentans (strain ATCC 700394 / DSM 18823 / ISDg) (Clostridium phytofermentans) protein is Homoserine O-acetyltransferase.